The primary structure comprises 657 residues: UvrABC system protein B (657 aa).

Residues 24–409 (AGVRNQVKSQ…SGHIVQQIIR (386 aa)) enclose the Helicase ATP-binding domain. 37–44 (GTTGSGKT) contacts ATP. Positions 90-113 (YYDYYQPEAYIARSDTYIEKSLLI) match the Beta-hairpin motif. The Helicase C-terminal domain occupies 426–589 (QVDDLLEEIR…IVPKPIIKAI (164 aa)). One can recognise a UVR domain in the interval 617–652 (EEQIKKYEALMQRAAKEFRFNEAAKYRDAMQACKEQ).

Belongs to the UvrB family. As to quaternary structure, forms a heterotetramer with UvrA during the search for lesions. Interacts with UvrC in an incision complex.

Its subcellular location is the cytoplasm. In terms of biological role, the UvrABC repair system catalyzes the recognition and processing of DNA lesions. A damage recognition complex composed of 2 UvrA and 2 UvrB subunits scans DNA for abnormalities. Upon binding of the UvrA(2)B(2) complex to a putative damaged site, the DNA wraps around one UvrB monomer. DNA wrap is dependent on ATP binding by UvrB and probably causes local melting of the DNA helix, facilitating insertion of UvrB beta-hairpin between the DNA strands. Then UvrB probes one DNA strand for the presence of a lesion. If a lesion is found the UvrA subunits dissociate and the UvrB-DNA preincision complex is formed. This complex is subsequently bound by UvrC and the second UvrB is released. If no lesion is found, the DNA wraps around the other UvrB subunit that will check the other stand for damage. The chain is UvrABC system protein B from Chlamydia pneumoniae (Chlamydophila pneumoniae).